The following is a 78-amino-acid chain: Beta-defensin 12 (78 aa).

The signal sequence occupies residues 1–27 (MALSRGTFYFGLALFFIVVELPSGSWA). 3 disulfide bridges follow: Cys-46–Cys-73, Cys-53–Cys-67, and Cys-57–Cys-74.

Belongs to the beta-defensin family.

Its subcellular location is the secreted. Its function is as follows. Has antibacterial activity. This chain is Beta-defensin 12 (Defb12), found in Rattus norvegicus (Rat).